Here is a 410-residue protein sequence, read N- to C-terminus: Lissencephaly-1 homolog B (410 aa).

The 33-residue stretch at 7 to 39 folds into the LisH domain; the sequence is QRDELNRAIADYLRSNGYEEAYSTFKKEAELDV. Residues 56–82 adopt a coiled-coil conformation; the sequence is TSVIRLQKKVMELESKLNEAKEEITLG. 7 WD repeats span residues 106-147, 148-187, 190-229, 232-271, 274-333, 336-377, and 379-410; these read GHRS…RTLK, GHTD…CIRT, GHDH…CVKT, GHRE…CKAE, EHEH…CLMT, GHDN…KTLS, and HEHF…WECR.

This sequence belongs to the WD repeat LIS1/nudF family. Can self-associate. Component of the cytosolic PAF-AH (I) heterotetrameric enzyme, which is composed of PAFAH1B1 (beta), PAFAH1B2 (alpha2) and PAFAH1B3 (alpha1) subunits. The catalytic activity of the enzyme resides in the alpha1 (PAFAH1B3) and alpha2 (PAFAH1B2) subunits, whereas the beta subunit (PAFAH1B1) has regulatory activity. Trimer formation is not essential for the catalytic activity. Interacts with dynein, dynactin, nde1 and ndel1. Enriched in the photoreceptor cell layer.

The protein localises to the cytoplasm. It localises to the cytoskeleton. Its subcellular location is the microtubule organizing center. The protein resides in the centrosome. Its function is as follows. Regulatory subunit (beta subunit) of the cytosolic type I platelet-activating factor (PAF) acetylhydrolase (PAF-AH (I)), an enzyme that catalyzes the hydrolyze of the acetyl group at the sn-2 position of PAF and its analogs and participates in the PAF inactivation. Regulates the PAF-AH (I) activity in a catalytic dimer composition-dependent manner. Positively regulates the activity of the minus-end directed microtubule motor protein dynein. May enhance dynein-mediated microtubule sliding by targeting dynein to the microtubule plus end. Required for several dynein- and microtubule-dependent processes such as the maintenance of Golgi integrity, the peripheral transport of microtubule fragments and the coupling of the nucleus and centrosome. May be required for proliferation of neuronal precursors and neuronal migration. Involved in the positioning of nuclei in photoreceptor cells. In Danio rerio (Zebrafish), this protein is Lissencephaly-1 homolog B (pafah1b1b).